We begin with the raw amino-acid sequence, 210 residues long: Ribonuclease HII (210 aa).

The region spanning 16–207 (AIVVGVDEVG…VKKCIISTKN (192 aa)) is the RNase H type-2 domain. A divalent metal cation-binding residues include D22, E23, and D116.

This sequence belongs to the RNase HII family. Mn(2+) serves as cofactor. Mg(2+) is required as a cofactor.

It localises to the cytoplasm. It catalyses the reaction Endonucleolytic cleavage to 5'-phosphomonoester.. Its function is as follows. Endonuclease that specifically degrades the RNA of RNA-DNA hybrids. In Anaplasma phagocytophilum (strain HZ), this protein is Ribonuclease HII.